A 299-amino-acid polypeptide reads, in one-letter code: Porphobilinogen deaminase (299 aa).

S-(dipyrrolylmethanemethyl)cysteine is present on C242.

The protein belongs to the HMBS family. Monomer. Requires dipyrromethane as cofactor.

The enzyme catalyses 4 porphobilinogen + H2O = hydroxymethylbilane + 4 NH4(+). The protein operates within porphyrin-containing compound metabolism; protoporphyrin-IX biosynthesis; coproporphyrinogen-III from 5-aminolevulinate: step 2/4. Functionally, tetrapolymerization of the monopyrrole PBG into the hydroxymethylbilane pre-uroporphyrinogen in several discrete steps. This Rickettsia prowazekii (strain Madrid E) protein is Porphobilinogen deaminase (hemC).